A 338-amino-acid polypeptide reads, in one-letter code: 1-aminocyclopropane-1-carboxylate deaminase (338 aa).

N6-(pyridoxal phosphate)lysine is present on K51. The active-site Nucleophile is the S78.

This sequence belongs to the ACC deaminase/D-cysteine desulfhydrase family. Homotrimer. Requires pyridoxal 5'-phosphate as cofactor.

The enzyme catalyses 1-aminocyclopropane-1-carboxylate + H2O = 2-oxobutanoate + NH4(+). Its function is as follows. Catalyzes a cyclopropane ring-opening reaction, the irreversible conversion of 1-aminocyclopropane-1-carboxylate (ACC) to ammonia and alpha-ketobutyrate. Allows growth on ACC as a nitrogen source. In Burkholderia pseudomallei (strain 1106a), this protein is 1-aminocyclopropane-1-carboxylate deaminase.